The chain runs to 31 residues: Photosystem II reaction center protein T (31 aa).

Residues Ser-3–Phe-23 traverse the membrane as a helical segment.

It belongs to the PsbT family. As to quaternary structure, PSII is composed of 1 copy each of membrane proteins PsbA, PsbB, PsbC, PsbD, PsbE, PsbF, PsbH, PsbI, PsbJ, PsbK, PsbL, PsbM, PsbT, PsbX, PsbY, PsbZ, Psb30/Ycf12, peripheral proteins PsbO, CyanoQ (PsbQ), PsbU, PsbV and a large number of cofactors. It forms dimeric complexes.

It is found in the cellular thylakoid membrane. Functionally, found at the monomer-monomer interface of the photosystem II (PS II) dimer, plays a role in assembly and dimerization of PSII. PSII is a light-driven water plastoquinone oxidoreductase, using light energy to abstract electrons from H(2)O, generating a proton gradient subsequently used for ATP formation. This is Photosystem II reaction center protein T from Crocosphaera subtropica (strain ATCC 51142 / BH68) (Cyanothece sp. (strain ATCC 51142)).